Here is a 293-residue protein sequence, read N- to C-terminus: Nucleotide-binding protein BA_5384/GBAA_5384/BAS5004 (293 aa).

Position 14–21 (14–21 (GMSGAGKT)) interacts with ATP. Residue 65 to 68 (DLRG) participates in GTP binding.

This sequence belongs to the RapZ-like family.

Its function is as follows. Displays ATPase and GTPase activities. This Bacillus anthracis protein is Nucleotide-binding protein BA_5384/GBAA_5384/BAS5004.